We begin with the raw amino-acid sequence, 379 residues long: MVLQSTRWLALGYFTYFFSYGIFLPFWSVWLKGIGLTPETIGLLLGAGLVARFLGSLLIAPRVSDPSRLISALRVLALLTLLFAVAFWAGAHVAWLMLVMIGFNLFFSPLVPLTDALANTWQKQFPLDYGKVRLWGSVAFVIGSALTGKLVTMFDYRVILALLTLGVASMLLGFLIRPTIQPQGASRQQESTGWSAWLALVRQNWRFLACVCLLQGAHAAYYGFSAIYWQAAGYSASAVGYLWSLGVVAEVIIFALSNKLFRRCSARDMLLISAICGVVRWGIMGATTALPWLIVVQILHCGTFTVCHLAAMRYIAARQGSEVIRLQAVYSAVAMGGSIAIMTVFAGFLYQYLGHGVFWVMALVALPAMFLRPKVVPSC.

The Cytoplasmic segment spans residues 1-4 (MVLQ). Residues 5 to 31 (STRWLALGYFTYFFSYGIFLPFWSVWL) traverse the membrane as a helical segment. Residues 32 to 37 (KGIGLT) lie on the Periplasmic side of the membrane. The helical transmembrane segment at 38–66 (PETIGLLLGAGLVARFLGSLLIAPRVSDP) threads the bilayer. At 67-70 (SRLI) the chain is on the cytoplasmic side. Residues 71-96 (SALRVLALLTLLFAVAFWAGAHVAWL) form a helical membrane-spanning segment. Residues 97–100 (MLVM) lie on the Periplasmic side of the membrane. A helical transmembrane segment spans residues 101-118 (IGFNLFFSPLVPLTDALA). Residues 119-129 (NTWQKQFPLDY) lie on the Cytoplasmic side of the membrane. A helical transmembrane segment spans residues 130–152 (GKVRLWGSVAFVIGSALTGKLVT). Over 153 to 155 (MFD) the chain is Periplasmic. A helical membrane pass occupies residues 156–175 (YRVILALLTLGVASMLLGFL). The Cytoplasmic portion of the chain corresponds to 176–207 (IRPTIQPQGASRQQESTGWSAWLALVRQNWRF). A helical membrane pass occupies residues 208–227 (LACVCLLQGAHAAYYGFSAI). Over 228-231 (YWQA) the chain is Periplasmic. A helical transmembrane segment spans residues 232–256 (AGYSASAVGYLWSLGVVAEVIIFAL). Topologically, residues 257 to 266 (SNKLFRRCSA) are cytoplasmic. The helical transmembrane segment at 267-286 (RDMLLISAICGVVRWGIMGA) threads the bilayer. Residues 287-289 (TTA) lie on the Periplasmic side of the membrane. A helical transmembrane segment spans residues 290 to 312 (LPWLIVVQILHCGTFTVCHLAAM). The Cytoplasmic portion of the chain corresponds to 313–323 (RYIAARQGSEV). Residues 324-351 (IRLQAVYSAVAMGGSIAIMTVFAGFLYQ) traverse the membrane as a helical segment. The Periplasmic segment spans residues 352-354 (YLG). Residues 355–375 (HGVFWVMALVALPAMFLRPKV) traverse the membrane as a helical segment. Residues 376–379 (VPSC) lie on the Cytoplasmic side of the membrane.

This sequence belongs to the major facilitator superfamily. Phenyl propionate permease (PPP) (TC 2.A.1.27) family.

The protein localises to the cell inner membrane. In terms of biological role, probable permease involved in the uptake of 3-phenylpropionic acid. The chain is Probable 3-phenylpropionic acid transporter (hcaT) from Escherichia coli (strain K12).